Consider the following 692-residue polypeptide: Phenoloxidase subunit 2 (692 aa).

The propeptide occupies 1 to 97 (MTDRVKSLQL…PRHQEMATEV (97 aa)). Cu cation-binding residues include His-213, His-217, and His-243. N-linked (GlcNAc...) asparagine glycosylation is found at Asn-256, Asn-295, and Asn-309. Glu-351 serves as the catalytic Proton acceptor. Residues His-366, His-370, and His-406 each coordinate Cu cation. The N-linked (GlcNAc...) asparagine glycan is linked to Asn-494. Cystine bridges form between Cys-583–Cys-628 and Cys-585–Cys-635.

It belongs to the tyrosinase family. As to quaternary structure, heterodimer. It depends on Cu(2+) as a cofactor.

It is found in the secreted. The catalysed reaction is L-tyrosine + O2 = L-dopaquinone + H2O. The enzyme catalyses 2 L-dopa + O2 = 2 L-dopaquinone + 2 H2O. In terms of biological role, copper-containing oxidase that functions in the formation of pigments such as melanins and other polyphenolic compounds. Catalyzes the rate-limiting conversions of tyrosine to DOPA, DOPA to DOPA-quinone and possibly 5,6 dihydroxyindole to indole-5'6 quinone. Binds to the surface of hemocytes and is involved in hemocyte melanization. Binds the A.niger cell wall component alpha-1,3-glucan, a fungal pathogen-associated molecular pattern (PAMP) that activates the host immune response. This chain is Phenoloxidase subunit 2, found in Galleria mellonella (Greater wax moth).